A 517-amino-acid chain; its full sequence is Optineurin (517 aa).

2 coiled-coil regions span residues 15–127 (NLGS…DLVA) and 174–453 (KAES…LGRH). Disordered stretches follow at residues 216 to 237 (KLEHADSSAQTSLPSAAETNAS) and 454 to 488 (SMSEMQRRHVPRGANPQGPTAPNNLPGGRGEWQQQ). The segment covering 222–237 (SSAQTSLPSAAETNAS) has biased composition (polar residues). The CCHC NOA-type zinc-finger motif lies at 487 to 517 (QQNIPDHACPKCGEVLPDLDSLQIHIMDCII). The Zn(2+) site is built by C495, C498, H511, and C515.

It is found in the cytoplasm. Its subcellular location is the perinuclear region. The protein localises to the golgi apparatus. The protein resides in the trans-Golgi network. It localises to the cytoplasmic vesicle. It is found in the recycling endosome. Its subcellular location is the autophagosome. Probably part of the TNF-alpha signaling pathway that can shift the equilibrium toward induction of cell death. May act by regulating membrane trafficking and cellular morphogenesis. This is Optineurin (optn) from Danio rerio (Zebrafish).